The sequence spans 264 residues: Gap junction beta-1 protein (264 aa).

The Cytoplasmic segment spans residues 1 to 22 (MNWAGLYAILSGVNRHSTSIGR). Residues 23–45 (IWLSVVFIFRIMVLVAAAESVWG) traverse the membrane as a helical segment. Over 46–75 (DEKSAFTCNTQQPGCNSVCYDHFFPISHIR) the chain is Extracellular. The helical transmembrane segment at 76–98 (LWALQLIIVSTPALLVAMHVAHL) threads the bilayer. Residues 99 to 130 (QHQEKKELRLSRHVKDQELAEVKKHKVKISGT) lie on the Cytoplasmic side of the membrane. A helical membrane pass occupies residues 131-153 (LWWTYISSVFFRIIFEAAFMYIF). Residues 154–191 (YLIYPGYSMIRLLKCDAYPCPNTVDCFVSRPTEKTIFT) are Extracellular-facing. The helical transmembrane segment at 192–214 (VFMLVASGVCIVLNVAEVFFLIA) threads the bilayer. Residues 215-264 (QACTRRARRHRDSGSISKEHQQNEMNLLITGGSIIKRSAGQEKGDHCSTS) are Cytoplasmic-facing.

This sequence belongs to the connexin family. Beta-type (group I) subfamily. As to quaternary structure, a connexon is composed of a hexamer of connexins. Lung, liver, intestines, stomach and kidney.

Its subcellular location is the cell membrane. The protein localises to the cell junction. It localises to the gap junction. One gap junction consists of a cluster of closely packed pairs of transmembrane channels, the connexons, through which materials of low MW diffuse from one cell to a neighboring cell. The protein is Gap junction beta-1 protein (gjb1) of Xenopus laevis (African clawed frog).